A 206-amino-acid polypeptide reads, in one-letter code: Ribonuclease HII (206 aa).

Residues 19 to 206 enclose the RNase H type-2 domain; sequence ALIAGVDEVG…GPVKRALGIE (188 aa). A divalent metal cation-binding residues include aspartate 25, glutamate 26, and aspartate 117.

The protein belongs to the RNase HII family. Mn(2+) serves as cofactor. It depends on Mg(2+) as a cofactor.

Its subcellular location is the cytoplasm. It carries out the reaction Endonucleolytic cleavage to 5'-phosphomonoester.. Functionally, endonuclease that specifically degrades the RNA of RNA-DNA hybrids. This Vibrio cholerae serotype O1 (strain M66-2) protein is Ribonuclease HII.